Here is a 242-residue protein sequence, read N- to C-terminus: UPF0309 protein BSUIS_B0903 (242 aa).

The 185-residue stretch at 30–214 folds into the SIS domain; the sequence is AADLIAAAAR…ARLVGEGDAP (185 aa).

The protein belongs to the UPF0309 family.

The chain is UPF0309 protein BSUIS_B0903 from Brucella suis (strain ATCC 23445 / NCTC 10510).